The primary structure comprises 195 residues: Neurensin-1 (195 aa).

2 helical membrane passes run 66–86 (LISG…GFLV) and 120–140 (AVLF…SVFV).

This sequence belongs to the VMP family. Expressed in brain. Not detectable in other tissues tested.

The protein localises to the membrane. The protein resides in the cell projection. Its subcellular location is the neuron projection. Functionally, may play an important role in neural organelle transport, and in transduction of nerve signals or in nerve growth. May play a role in neurite extension. May play a role in memory consolidation. The protein is Neurensin-1 of Homo sapiens (Human).